Here is a 453-residue protein sequence, read N- to C-terminus: Tol-Pal system protein TolB (453 aa).

Residues 1–31 (MINNLSISMTKVIKIILAIIIILFNTLSIFA) form the signal peptide.

This sequence belongs to the TolB family. In terms of assembly, the Tol-Pal system is composed of five core proteins: the inner membrane proteins TolA, TolQ and TolR, the periplasmic protein TolB and the outer membrane protein Pal. They form a network linking the inner and outer membranes and the peptidoglycan layer.

It localises to the periplasm. Its function is as follows. Part of the Tol-Pal system, which plays a role in outer membrane invagination during cell division and is important for maintaining outer membrane integrity. This Orientia tsutsugamushi (strain Ikeda) (Rickettsia tsutsugamushi) protein is Tol-Pal system protein TolB.